A 451-amino-acid chain; its full sequence is Exodeoxyribonuclease 7 large subunit (451 aa).

Belongs to the XseA family. As to quaternary structure, heterooligomer composed of large and small subunits.

The protein resides in the cytoplasm. It catalyses the reaction Exonucleolytic cleavage in either 5'- to 3'- or 3'- to 5'-direction to yield nucleoside 5'-phosphates.. Functionally, bidirectionally degrades single-stranded DNA into large acid-insoluble oligonucleotides, which are then degraded further into small acid-soluble oligonucleotides. In Thiobacillus denitrificans (strain ATCC 25259 / T1), this protein is Exodeoxyribonuclease 7 large subunit.